A 252-amino-acid chain; its full sequence is Hydroxyacylglutathione hydrolase (252 aa).

Histidine 54, histidine 56, aspartate 58, histidine 59, histidine 111, aspartate 130, and histidine 170 together coordinate Zn(2+).

It belongs to the metallo-beta-lactamase superfamily. Glyoxalase II family. In terms of assembly, monomer. The cofactor is Zn(2+).

It carries out the reaction an S-(2-hydroxyacyl)glutathione + H2O = a 2-hydroxy carboxylate + glutathione + H(+). It functions in the pathway secondary metabolite metabolism; methylglyoxal degradation; (R)-lactate from methylglyoxal: step 2/2. Functionally, thiolesterase that catalyzes the hydrolysis of S-D-lactoyl-glutathione to form glutathione and D-lactic acid. This chain is Hydroxyacylglutathione hydrolase, found in Francisella tularensis subsp. holarctica (strain FTNF002-00 / FTA).